The primary structure comprises 281 residues: 3-methyl-2-oxobutanoate hydroxymethyltransferase (281 aa).

The segment at 1 to 20 (MSEQTIYGANTPGGSGPRTK) is disordered. Residues Asp-62 and Asp-101 each coordinate Mg(2+). Residues 62-63 (DS), Asp-101, and Lys-131 contribute to the 3-methyl-2-oxobutanoate site. A Mg(2+)-binding site is contributed by Glu-133. The active-site Proton acceptor is Glu-199.

This sequence belongs to the PanB family. As to quaternary structure, homodecamer; pentamer of dimers. Mg(2+) is required as a cofactor.

The protein resides in the cytoplasm. It catalyses the reaction 3-methyl-2-oxobutanoate + (6R)-5,10-methylene-5,6,7,8-tetrahydrofolate + H2O = 2-dehydropantoate + (6S)-5,6,7,8-tetrahydrofolate. The protein operates within cofactor biosynthesis; (R)-pantothenate biosynthesis; (R)-pantoate from 3-methyl-2-oxobutanoate: step 1/2. Functionally, catalyzes the reversible reaction in which hydroxymethyl group from 5,10-methylenetetrahydrofolate is transferred onto alpha-ketoisovalerate to form ketopantoate. This chain is 3-methyl-2-oxobutanoate hydroxymethyltransferase, found in Mycobacterium bovis (strain ATCC BAA-935 / AF2122/97).